Consider the following 355-residue polypeptide: Capsid protein VP1/VP2 (355 aa).

The segment covering 1–21 (MADSTTMEHDGRGTKRKREAD) has biased composition (basic and acidic residues). The disordered stretch occupies residues 1-41 (MADSTTMEHDGRGTKRKREADGGSGQGVGKGNSNAVKEGYG).

The protein belongs to the parvoviridae capsid protein family.

The protein localises to the virion. Capsid protein self-assembles to form an icosahedral capsid with a T=1 symmetry, about 22 nm in diameter, and consisting of 60 copies of size variants of the capsid proteins, which differ in the N-terminushe capsid encapsulates the genomic ssDNA. Capsid proteins are responsible for the attachment to host cell receptors. This attachment induces virion internalization predominantly through clathrin-dependent endocytosis. The polypeptide is Capsid protein VP1/VP2 (VP) (Aedes albopictus densovirus (isolate Boublik/1994) (AalDNV)).